The following is a 246-amino-acid chain: MSHESIEKNLNFVKKLNNVNDSVLKIENLALAYDNKKVLDGINISIEKGDIVTILGPNGGGKTSLMKVVAGISKNYTGSVIFADNIKISYMPQNFSISKLMPITVEYFLLNSFSKKLKKNQSVITEVIELVGIGSILKNQVLEISAGQMQLLLLAHCLIAEPDLIILDEPVSAMDINARAKFYDIIGEIAKKRLISILMTSHDLSSIVPCSDYIICINHTIYCQGKPGKIMEDRTLGEIFSSYIAK.

The 221-residue stretch at 24–244 (LKIENLALAY…TLGEIFSSYI (221 aa)) folds into the ABC transporter domain. Residue 56-63 (GPNGGGKT) participates in ATP binding.

Belongs to the ABC transporter superfamily. Zinc importer (TC 3.A.1.15.5) family. As to quaternary structure, the complex is composed of two ATP-binding proteins (ZnuC), two transmembrane proteins (ZnuB) and a solute-binding protein (ZnuA).

The protein resides in the cell membrane. It catalyses the reaction Zn(2+)(out) + ATP(in) + H2O(in) = Zn(2+)(in) + ADP(in) + phosphate(in) + H(+)(in). Functionally, part of the ABC transporter complex ZnuABC involved in zinc import. Responsible for energy coupling to the transport system. The sequence is that of Zinc import ATP-binding protein ZnuC from Wolbachia sp. subsp. Brugia malayi (strain TRS).